A 195-amino-acid polypeptide reads, in one-letter code: Thymidine kinase (195 aa).

ATP is bound by residues 15–22 and 88–91; these read GSMFSGKS and DEVQ. The active-site Proton acceptor is Glu-89. Residues Cys-145, Cys-148, Cys-183, and Xaa-186 each coordinate Zn(2+).

This sequence belongs to the thymidine kinase family. In terms of assembly, homotetramer.

It localises to the cytoplasm. The enzyme catalyses thymidine + ATP = dTMP + ADP + H(+). The chain is Thymidine kinase from Bacillus cereus (strain ATCC 10987 / NRS 248).